We begin with the raw amino-acid sequence, 533 residues long: Atypical kinase COQ8B, mitochondrial (533 aa).

A helical membrane pass occupies residues 93–109 (LASFGGLAVGLGLGALA). The short motif at 156-159 (KIGQ) is the KxGQ motif element. Residues 192-424 (MMRVLEEELG…DRVLQKSQDL (233 aa)) enclose the Protein kinase domain. Residues 217 to 220 (AAAS) carry the AAAS motif motif. ATP contacts are provided by residues Ser-220, Lys-238, and 325 to 328 (MELA). Asp-368 serves as the catalytic Proton acceptor. ATP contacts are provided by Asn-373 and Asp-387.

This sequence belongs to the protein kinase superfamily. ADCK protein kinase family. Homodimer; homodimerizes via its transmembrane region. Interacts with COQ6 and COQ7. Interacts with the multi-subunit COQ enzyme complex, composed of at least COQ3, COQ4, COQ5, COQ6, COQ7 and COQ9.

It localises to the mitochondrion membrane. The protein localises to the cytoplasm. Its subcellular location is the cytosol. It is found in the cell membrane. The protein operates within cofactor biosynthesis; ubiquinone biosynthesis. Functionally, atypical kinase involved in the biosynthesis of coenzyme Q, also named ubiquinone, an essential lipid-soluble electron transporter for aerobic cellular respiration. Its substrate specificity is still unclear: may act as a protein kinase that mediates phosphorylation of COQ3. According to other reports, acts as a small molecule kinase, possibly a lipid kinase that phosphorylates a prenyl lipid in the ubiquinone biosynthesis pathway, as suggested by its ability to bind coenzyme Q lipid intermediates. However, the small molecule kinase activity was not confirmed by another publication. Required for podocyte migration. The protein is Atypical kinase COQ8B, mitochondrial of Mus musculus (Mouse).